The following is a 352-amino-acid chain: NAD(P)H pyrophosphatase NUDT13, mitochondrial (352 aa).

Residues 1-20 constitute a mitochondrion transit peptide; the sequence is MSLYCRTFFRRKSFGCYRLL. The region spanning 196-323 is the Nudix hydrolase domain; that stretch reads PQMAPVVITL…SLALQPSEAS (128 aa). The short motif at 216–240 is the Nudix box element; it reads RQSSFPKGLYSALAGFCDIGESVEE.

Belongs to the Nudix hydrolase family. Mg(2+) serves as cofactor. Requires Mn(2+) as cofactor.

It localises to the mitochondrion. It catalyses the reaction NADH + H2O = reduced beta-nicotinamide D-ribonucleotide + AMP + 2 H(+). The enzyme catalyses NAD(+) + H2O = beta-nicotinamide D-ribonucleotide + AMP + 2 H(+). The catalysed reaction is NADPH + H2O = reduced beta-nicotinamide D-ribonucleotide + adenosine 2',5'-bisphosphate + 2 H(+). NAD(P)H pyrophosphatase that hydrolyzes NADH into NMNH and AMP, and NADPH into NMNH and 2',5'-ADP. Has a marked preference for the reduced pyridine nucleotides. Does not show activity toward NAD-capped RNAs; the NAD-cap is an atypical cap present at the 5'-end of some RNAs. The chain is NAD(P)H pyrophosphatase NUDT13, mitochondrial from Mus musculus (Mouse).